We begin with the raw amino-acid sequence, 753 residues long: Metal regulatory transcription factor 1 (753 aa).

N-acetylglycine is present on Gly-2. At Ser-5 the chain carries Phosphoserine. A Nuclear localization signal motif is present at residues 133–138 (KRKEVK). C2H2-type zinc fingers lie at residues 140-164 (YQCTFEGCPRTYSTAGNLRTHQKTH), 170-194 (FVCNQEGCGKAFLTSYSLRIHVRVH), 200-224 (FECDVQGCEKAFNTLYRLKAHQRLH), 229-253 (FNCESEGCSKYFTTLSDLRKHIRTH), 259-283 (FRCDHDGCGKAFAASHHLKTHVRTH), and 289-313 (FFCPSNGCEKTFSTQYSLKSHMKGH). A Phosphoserine modification is found at Ser-305. Disordered stretches follow at residues 308 to 328 (SHMKGHDNKGHSYNALPQHNG), 395 to 466 (ESFN…ALLQ), and 648 to 715 (SRRK…LSAM). The span at 408-417 (PPSTGNSASL) shows a compositional bias: polar residues. A compositionally biased stretch (pro residues) spans 655-666 (SPPPPEPSPQAP). Over residues 679–698 (SSAPVPGSSSSTLPSSCEQS) the composition is skewed to low complexity. The segment covering 700 to 712 (QAETPSDPQTETL) has biased composition (polar residues).

It is found in the nucleus. The protein resides in the cytoplasm. Functionally, zinc-dependent transcriptional regulator of cellular adaption to conditions of exposure to heavy metals. Binds to metal responsive elements (MRE) in promoters and activates the transcription of metallothionein genes like metallothionein-2/MT2A. Also regulates the expression of metalloproteases in response to intracellular zinc and functions as a catabolic regulator of cartilages. This is Metal regulatory transcription factor 1 (MTF1) from Homo sapiens (Human).